The primary structure comprises 489 residues: Fumarate reductase (CoM/CoB) subunit B (489 aa).

Positions 2–89 constitute a 2Fe-2S ferredoxin-type domain; it reads INVKVLRFEP…GAVIEPVDLP (88 aa). Residues C53, C58, C61, and C73 each coordinate [2Fe-2S] cluster. 2 consecutive 4Fe-4S ferredoxin-type domains span residues 124–158 and 178–209; these read PEDYQDTKKLRGCIECFSCISSCPVIKESTEYAGP and AAGGVEEGLYCCTTCGKCAEVCPKELNVPGDA. Positions 136, 139, 142, 146, 189, 192, 195, and 199 each coordinate [4Fe-4S] cluster.

Subunit B of the heterodimeric fumarate reductase of methanogenic Archaea, composed of subunits A (TfrA) and B (TfrB). Requires [2Fe-2S] cluster as cofactor. [4Fe-4S] cluster is required as a cofactor.

It localises to the cytoplasm. The enzyme catalyses coenzyme B + coenzyme M + fumarate = coenzyme M-coenzyme B heterodisulfide + succinate. Functionally, catalyzes the reduction of fumarate with reduced coenzyme M (CoM-S-H) and coenzyme B (CoB-S-H). In vitro, is able to reduces fumarate with reduced benzyl viologen, oxidize CoM-S-H and CoB-S-H to CoM-S-S-CoB with methylene blue, and reduce CoM-S-S-CoB with reduced benzyl viologen. The enzyme has specificity for the two thiol compounds as the CoB--CoM heterodisulfide reductase. The enzyme is very sensitive to oxygen. The polypeptide is Fumarate reductase (CoM/CoB) subunit B (Methanothermobacter marburgensis (strain ATCC BAA-927 / DSM 2133 / JCM 14651 / NBRC 100331 / OCM 82 / Marburg) (Methanobacterium thermoautotrophicum)).